A 403-amino-acid chain; its full sequence is Ribosomal RNA large subunit methyltransferase I (403 aa).

In terms of domain architecture, PUA spans 9–88 (YPRLVLSKGR…ESIDIAFFTR (80 aa)).

The protein belongs to the methyltransferase superfamily. RlmI family.

Its subcellular location is the cytoplasm. The enzyme catalyses cytidine(1962) in 23S rRNA + S-adenosyl-L-methionine = 5-methylcytidine(1962) in 23S rRNA + S-adenosyl-L-homocysteine + H(+). In terms of biological role, specifically methylates the cytosine at position 1962 (m5C1962) of 23S rRNA. The polypeptide is Ribosomal RNA large subunit methyltransferase I (Salmonella agona (strain SL483)).